Consider the following 465-residue polypeptide: Glutamate--tRNA ligase 2 (465 aa).

The 'HIGH' region signature appears at 8 to 18 (PSPTGLMHLGN). The 'KMSKS' region signature appears at 249 to 253 (PLSKR). K252 lines the ATP pocket.

The protein belongs to the class-I aminoacyl-tRNA synthetase family. Glutamate--tRNA ligase type 1 subfamily. As to quaternary structure, monomer.

The protein resides in the cytoplasm. The enzyme catalyses tRNA(Glu) + L-glutamate + ATP = L-glutamyl-tRNA(Glu) + AMP + diphosphate. Catalyzes the attachment of glutamate to tRNA(Glu) in a two-step reaction: glutamate is first activated by ATP to form Glu-AMP and then transferred to the acceptor end of tRNA(Glu). The sequence is that of Glutamate--tRNA ligase 2 from Coxiella burnetii (strain RSA 331 / Henzerling II).